A 457-amino-acid chain; its full sequence is PDZ and LIM domain protein 7 (457 aa).

The region spanning 1-85 (MDSFKVVLEG…RLSLGLSRAQ (85 aa)) is the PDZ domain. At Ser78 the chain carries Phosphoserine. 3 disordered regions span residues 82 to 142 (SRAQ…LVPD), 176 to 226 (TEFM…PWAV), and 239 to 258 (TSTV…LQSR). The residue at position 103 (Arg103) is an Asymmetric dimethylarginine. Ser111 bears the Phosphoserine mark. The span at 208 to 221 (EPWPGPTAPSPTSR) shows a compositional bias: pro residues. Residue Ser247 is modified to Phosphoserine. 3 LIM zinc-binding domains span residues 280-338 (PVCH…VRYA), 339-398 (PSCA…MFGT), and 399-457 (KCHG…FSHV).

In terms of assembly, binds via its LIM zinc-binding 3 domain (LIM 3) to endocytic codes of INSR, but not with those of IGF1R, LDLR, TFRC, or EGFR. Interacts with various PKC isoforms through the LIM zinc-binding domains. Binds to RET in a phosphorylation-independent manner via its LIM zinc-binding domain 2 (LIM 2). Probably part of a complex with SHC and the RET dimer. Interacts with TPM2. Interacts with TBX4 and TBX5. As to expression, isoform 1 and isoform 2 are expressed ubiquitously, however, isoform 2 predominates in skeletal muscle, isoform 1 is more abundant in lung, spleen, leukocytes and fetal liver.

The protein resides in the cytoplasm. Its subcellular location is the cytoskeleton. Functionally, may function as a scaffold on which the coordinated assembly of proteins can occur. May play a role as an adapter that, via its PDZ domain, localizes LIM-binding proteins to actin filaments of both skeletal muscle and nonmuscle tissues. Involved in both of the two fundamental mechanisms of bone formation, direct bone formation (e.g. embryonic flat bones mandible and cranium), and endochondral bone formation (e.g. embryonic long bone development). Plays a role during fracture repair. Involved in BMP6 signaling pathway. In Homo sapiens (Human), this protein is PDZ and LIM domain protein 7 (PDLIM7).